A 365-amino-acid chain; its full sequence is S-adenosylmethionine:tRNA ribosyltransferase-isomerase (365 aa).

It belongs to the QueA family. As to quaternary structure, monomer.

Its subcellular location is the cytoplasm. It carries out the reaction 7-aminomethyl-7-carbaguanosine(34) in tRNA + S-adenosyl-L-methionine = epoxyqueuosine(34) in tRNA + adenine + L-methionine + 2 H(+). The protein operates within tRNA modification; tRNA-queuosine biosynthesis. In terms of biological role, transfers and isomerizes the ribose moiety from AdoMet to the 7-aminomethyl group of 7-deazaguanine (preQ1-tRNA) to give epoxyqueuosine (oQ-tRNA). This Rickettsia rickettsii (strain Iowa) protein is S-adenosylmethionine:tRNA ribosyltransferase-isomerase.